Reading from the N-terminus, the 284-residue chain is D-tagatose-1,6-bisphosphate aldolase subunit GatY (284 aa).

Aspartate 82 serves as the catalytic Proton donor. The Zn(2+) site is built by histidine 83 and histidine 180. Glycine 181 serves as a coordination point for dihydroxyacetone phosphate. Histidine 208 is a Zn(2+) binding site. Residues 209–211 (GAS) and 230–233 (NVAT) contribute to the dihydroxyacetone phosphate site.

The protein belongs to the class II fructose-bisphosphate aldolase family. TagBP aldolase GatY subfamily. Forms a complex with GatZ. The cofactor is Zn(2+).

The enzyme catalyses D-tagatofuranose 1,6-bisphosphate = D-glyceraldehyde 3-phosphate + dihydroxyacetone phosphate. The protein operates within carbohydrate metabolism; D-tagatose 6-phosphate degradation; D-glyceraldehyde 3-phosphate and glycerone phosphate from D-tagatose 6-phosphate: step 2/2. Catalytic subunit of the tagatose-1,6-bisphosphate aldolase GatYZ, which catalyzes the reversible aldol condensation of dihydroxyacetone phosphate (DHAP or glycerone-phosphate) with glyceraldehyde 3-phosphate (G3P) to produce tagatose 1,6-bisphosphate (TBP). Requires GatZ subunit for full activity and stability. Is involved in the catabolism of galactitol. The sequence is that of D-tagatose-1,6-bisphosphate aldolase subunit GatY from Salmonella paratyphi B (strain ATCC BAA-1250 / SPB7).